A 112-amino-acid polypeptide reads, in one-letter code: Probable prefoldin subunit 1 (112 aa).

It belongs to the prefoldin subunit beta family. In terms of assembly, heterohexamer of two PFD-alpha type and four PFD-beta type subunits.

In terms of biological role, binds specifically to cytosolic chaperonin (c-CPN) and transfers target proteins to it. Binds to nascent polypeptide chain and promotes folding in an environment in which there are many competing pathways for nonnative proteins. This is Probable prefoldin subunit 1 from Schizosaccharomyces pombe (strain 972 / ATCC 24843) (Fission yeast).